Consider the following 429-residue polypeptide: uncharacterized protein (429 aa).

The next 11 membrane-spanning stretches (helical) occupy residues 27–47 (PFFFLFCLFIPFDNTSLQSIG), 48–68 (GIMTASPSALILLPGLFVSIL), 78–98 (ILLCFFGVLLISFLYYFYWVF), 106–126 (IFILDRGSRYFLLYVFYFLAL), 142–162 (ALIIIVVIFSVLLNYLDPAII), 198–218 (LLLAVLLNWSTFFLVTVTIVI), 219–239 (AILTTSKGAALSFLICICFYF), 249–269 (VLLSLCSIVISYIIFKYYFLD), 288–308 (FIVGLKIFLFNPLGVGFFGYL), 351–371 (LILDLLIIYGVFFLIPFIYFI), and 399–419 (FFISHLGSYFTPFCIAFLIIL).

The protein resides in the cell membrane. In terms of biological role, may function as a transporter. This is an uncharacterized protein from Klebsiella pneumoniae.